Reading from the N-terminus, the 228-residue chain is Ribose-5-phosphate isomerase A (228 aa).

Residues 29–32 (TGST), 85–88 (DGAD), and 98–101 (KGGG) contribute to the substrate site. The active-site Proton acceptor is glutamate 107. Lysine 125 is a substrate binding site.

It belongs to the ribose 5-phosphate isomerase family. As to quaternary structure, homodimer.

The catalysed reaction is aldehydo-D-ribose 5-phosphate = D-ribulose 5-phosphate. It functions in the pathway carbohydrate degradation; pentose phosphate pathway; D-ribose 5-phosphate from D-ribulose 5-phosphate (non-oxidative stage): step 1/1. Its function is as follows. Catalyzes the reversible conversion of ribose-5-phosphate to ribulose 5-phosphate. This chain is Ribose-5-phosphate isomerase A, found in Staphylococcus aureus (strain COL).